The chain runs to 816 residues: Leucine--tRNA ligase (816 aa).

The 'HIGH' region signature appears at 46 to 56; it reads PYPSGALHMGH. Positions 638-642 match the 'KMSKS' region motif; that stretch reads KMSKS. Lysine 641 contributes to the ATP binding site.

Belongs to the class-I aminoacyl-tRNA synthetase family.

Its subcellular location is the cytoplasm. It carries out the reaction tRNA(Leu) + L-leucine + ATP = L-leucyl-tRNA(Leu) + AMP + diphosphate. In Xanthomonas campestris pv. campestris (strain ATCC 33913 / DSM 3586 / NCPPB 528 / LMG 568 / P 25), this protein is Leucine--tRNA ligase.